The chain runs to 183 residues: Ribosome rescue factor SmrB (183 aa).

A Smr domain is found at 98-173 (LDLHGLTQLQ…GDAALLVLIE (76 aa)).

The protein belongs to the SmrB family. Associates with collided ribosomes, but not with correctly translating polysomes.

In terms of biological role, acts as a ribosome collision sensor. Detects stalled/collided disomes (pairs of ribosomes where the leading ribosome is stalled and a second ribosome has collided with it) and endonucleolytically cleaves mRNA at the 5' boundary of the stalled ribosome. Stalled/collided disomes form a new interface (primarily via the 30S subunits) that binds SmrB. Cleaved mRNA becomes available for tmRNA ligation, leading to ribosomal subunit dissociation and rescue of stalled ribosomes. The polypeptide is Ribosome rescue factor SmrB (Salmonella arizonae (strain ATCC BAA-731 / CDC346-86 / RSK2980)).